We begin with the raw amino-acid sequence, 229 residues long: DNA repair protein RecO (229 aa).

Belongs to the RecO family.

In terms of biological role, involved in DNA repair and RecF pathway recombination. The sequence is that of DNA repair protein RecO from Legionella pneumophila (strain Corby).